The chain runs to 120 residues: Glycine cleavage system H protein (120 aa).

In terms of domain architecture, Lipoyl-binding spans 17-99 (VATVGITAHA…QGGGWLYRLK (83 aa)). K58 carries the N6-lipoyllysine modification.

It belongs to the GcvH family. As to quaternary structure, the glycine cleavage system is composed of four proteins: P, T, L and H. (R)-lipoate serves as cofactor.

Its function is as follows. The glycine cleavage system catalyzes the degradation of glycine. The H protein shuttles the methylamine group of glycine from the P protein to the T protein. This chain is Glycine cleavage system H protein, found in Methylorubrum extorquens (strain CM4 / NCIMB 13688) (Methylobacterium extorquens).